The following is a 129-amino-acid chain: Ribosome-binding factor A (129 aa).

This sequence belongs to the RbfA family. In terms of assembly, monomer. Binds 30S ribosomal subunits, but not 50S ribosomal subunits or 70S ribosomes.

The protein resides in the cytoplasm. In terms of biological role, one of several proteins that assist in the late maturation steps of the functional core of the 30S ribosomal subunit. Associates with free 30S ribosomal subunits (but not with 30S subunits that are part of 70S ribosomes or polysomes). Required for efficient processing of 16S rRNA. May interact with the 5'-terminal helix region of 16S rRNA. This is Ribosome-binding factor A from Pseudomonas aeruginosa (strain UCBPP-PA14).